A 361-amino-acid polypeptide reads, in one-letter code: Peptide chain release factor 1 (361 aa).

N5-methylglutamine is present on Q237.

Belongs to the prokaryotic/mitochondrial release factor family. Post-translationally, methylated by PrmC. Methylation increases the termination efficiency of RF1.

The protein resides in the cytoplasm. Its function is as follows. Peptide chain release factor 1 directs the termination of translation in response to the peptide chain termination codons UAG and UAA. The sequence is that of Peptide chain release factor 1 from Chromohalobacter salexigens (strain ATCC BAA-138 / DSM 3043 / CIP 106854 / NCIMB 13768 / 1H11).